Here is a 215-residue protein sequence, read N- to C-terminus: Chaperone protein TorD (215 aa).

The protein belongs to the TorD/DmsD family. TorD subfamily.

It is found in the cytoplasm. Its function is as follows. Involved in the biogenesis of TorA. Acts on TorA before the insertion of the molybdenum cofactor and, as a result, probably favors a conformation of the apoenzyme that is competent for acquiring the cofactor. This Vibrio parahaemolyticus serotype O3:K6 (strain RIMD 2210633) protein is Chaperone protein TorD.